We begin with the raw amino-acid sequence, 830 residues long: Post-transcriptional regulator MKT1 (830 aa).

Lysine 4 is covalently cross-linked (Glycyl lysine isopeptide (Lys-Gly) (interchain with G-Cter in ubiquitin)). The interval 130–380 is interaction with PBP1; the sequence is RSRGWTQWNN…SPATTVTKNA (251 aa). The disordered stretch occupies residues 347–400; that stretch reads DSEKNNKDGKKSNLSSPSSASSSASPATTVTKNASEKLTYEKSSTKEVRKPRDI. 3 positions are modified to phosphoserine: serine 358, serine 362, and serine 371. Over residues 361–373 the composition is skewed to low complexity; sequence SSPSSASSSASPA. The segment covering 380–400 has biased composition (basic and acidic residues); it reads ASEKLTYEKSSTKEVRKPRDI.

Belongs to the XPG/RAD2 endonuclease family. Interacts (via C-terminus) with PBP1 (via C-terminus).

It localises to the cytoplasm. The protein resides in the cytosol. In terms of biological role, involved in 3'-UTR mediated RNA regulation. Binds to RNA-binding and RNA regulatory proteins. Complexes with PAB1-binding protein to promote mRNA interactions with poly(A)-binding protein. Promotes mating-type switching in mother cells by positively regulating HO expression. The chain is Post-transcriptional regulator MKT1 (MKT1) from Saccharomyces cerevisiae (strain ATCC 204508 / S288c) (Baker's yeast).